Reading from the N-terminus, the 55-residue chain is Potassium channel toxin alpha-KTX 12 Sp2 (55 aa).

Residues 1–18 form the signal peptide; sequence MRLAIILLLMTTIVLTIG. Cystine bridges form between cysteine 26/cysteine 46, cysteine 32/cysteine 51, and cysteine 36/cysteine 53.

Belongs to the short scorpion toxin superfamily. Potassium channel inhibitor family. Alpha-KTx 12 subfamily. As to expression, expressed by the venom gland.

The protein localises to the secreted. Blocks mouse voltage-gated potassium channels Kv1.3/KCNA3 (IC(50)=0.3-30 nM), when the channel is expressed in Jurkat T cells or in HEK293 cells. Also shows a weaker inhibition on mKv1.2/KCNA2 (IC(50)=56.9 nM) and mKv1.1/KCNA1 (IC(50)=485 nM). Probably through the inhibition of both Kv1.2/KCNA2 and Kv1.3/KCNA3, the toxin also reduces the free calcium concentration in Jurkat T cells, inhibits the activation of Jurkat T cells and reduces the release of inflammatory cytokines interleukin-2, showing a strong immunosuppressant effect. The chain is Potassium channel toxin alpha-KTX 12 Sp2 from Scorpiops pococki (Scorpion).